The primary structure comprises 327 residues: Cell division protein ZipA (327 aa).

Topologically, residues 1 to 5 (MQDLR) are periplasmic. Residues 6–26 (LILIVVGAIAIIALLLHGLWT) traverse the membrane as a helical segment. The Cytoplasmic segment spans residues 27 to 327 (SRKERSSLFR…REVLDANTIA (301 aa)). The span at 60–71 (GEVRVRTSHPQE) shows a compositional bias: basic and acidic residues. The tract at residues 60 to 182 (GEVRVRTSHP…EPVAPAPEAK (123 aa)) is disordered. Polar residues-rich tracts occupy residues 94-103 (KSAQVKTASR) and 163-173 (APQQHVESQQE).

It belongs to the ZipA family. In terms of assembly, interacts with FtsZ via their C-terminal domains.

The protein localises to the cell inner membrane. In terms of biological role, essential cell division protein that stabilizes the FtsZ protofilaments by cross-linking them and that serves as a cytoplasmic membrane anchor for the Z ring. Also required for the recruitment to the septal ring of downstream cell division proteins. This Yersinia pseudotuberculosis serotype O:1b (strain IP 31758) protein is Cell division protein ZipA.